A 246-amino-acid polypeptide reads, in one-letter code: Large ribosomal subunit protein uL2 (246 aa).

Positions 196–226 (MSPYAHPHGGGSHQKGGTPVPKTAPPGQKVG) are disordered.

Belongs to the universal ribosomal protein uL2 family. Part of the 50S ribosomal subunit. Forms a bridge to the 30S subunit in the 70S ribosome.

In terms of biological role, one of the primary rRNA binding proteins. Required for association of the 30S and 50S subunits to form the 70S ribosome, for tRNA binding and peptide bond formation. It has been suggested to have peptidyltransferase activity; this is somewhat controversial. Makes several contacts with the 16S rRNA in the 70S ribosome. This Pyrobaculum arsenaticum (strain DSM 13514 / JCM 11321 / PZ6) protein is Large ribosomal subunit protein uL2.